Here is a 37-residue protein sequence, read N- to C-terminus: MIEVFLFGIVLGLIPITLAGLFVTAYLQYRRGGRLDV.

Residues 5–25 (FLFGIVLGLIPITLAGLFVTA) form a helical membrane-spanning segment.

This sequence belongs to the PetG family. The 4 large subunits of the cytochrome b6-f complex are cytochrome b6, subunit IV (17 kDa polypeptide, PetD), cytochrome f and the Rieske protein, while the 4 small subunits are PetG, PetL, PetM and PetN. The complex functions as a dimer.

It is found in the plastid thylakoid membrane. Component of the cytochrome b6-f complex, which mediates electron transfer between photosystem II (PSII) and photosystem I (PSI), cyclic electron flow around PSI, and state transitions. PetG is required for either the stability or assembly of the cytochrome b6-f complex. The polypeptide is Cytochrome b6-f complex subunit 5 (Cuscuta reflexa (Southern Asian dodder)).